The following is a 609-amino-acid chain: Isopenicillin N epimerase component 1 (609 aa).

185–196 (MLSGSGTTGLPK) is a binding site for AMP. Positions 545 to 570 (STDNHKHNKVPLRDEGVDPRSMGSKV) are disordered.

It belongs to the ATP-dependent AMP-binding enzyme family.

It carries out the reaction isopenicillin N = penicillin N. Its pathway is antibiotic biosynthesis; cephalosporin C biosynthesis. In terms of biological role, together with cefD2, catalyzes the reversible isomerization between isopenicillin N and penicillin N. This two-component IPN epimerase system may function by two sequential steps, an activation of isopenicillin N by the acyl-CoA synthase component cefD1, followed by epimerization by the acyl-CoA racemase component cefD2. The chain is Isopenicillin N epimerase component 1 (cefD1) from Hapsidospora chrysogena (Acremonium chrysogenum).